The following is a 554-amino-acid chain: Nonribosomal peptide synthetase ALT12 (554 aa).

Residues 1–76 enclose the Carrier domain; it reads MASLEHMKRI…TLWEAMNDTQ (76 aa). Serine 35 carries the post-translational modification O-(pantetheine 4'-phosphoryl)serine. A condensation region spans residues 124-434; the sequence is VQDNVLCVAP…QRIQNEITST (311 aa).

It belongs to the NRP synthetase family.

The protein operates within mycotoxin biosynthesis. Functionally, nonribosomal peptide synthetase; part of the gene cluster that mediates the biosynthesis of the host-selective toxins (HSTs) AAL-toxins, sphinganine-analog mycotoxins responsible for Alternaria stem canker on tomato by the tomato pathotype. The biosynthesis starts with the polyketide synthase ALT1-catalyzed C-16 carbon chain assembly from one starter acetyl-CoA unit with malonyl-CoA extender units. ALT1 also selectively transfers methyl groups at the first and the third cycle of chain elongation for AAL toxin. The C-16 polyketide chain is released from the enzyme by a nucleophilic attack of a carbanion, which is derived from R-carbon of glycin by decarboxylation, on the carbonyl carbon of polyketide acyl chain. This step is probably catalyzed by a pyridoxal 5'-phosphate-dependent aminoacyl transferase ALT4. The respective functions of the other enzymes encoded by the cluster have still to be elucidated. The sphingosine N-acyltransferase-like protein ALT7 seems not to act as a resistance/self-tolerance factor against the toxin in the toxin biosynthetic gene cluster, contrary to what is expected. In Alternaria alternata (Alternaria rot fungus), this protein is Nonribosomal peptide synthetase ALT12.